A 434-amino-acid polypeptide reads, in one-letter code: D-amino acid dehydrogenase (434 aa).

3–17 (VLVLGSGVIGTASAY) provides a ligand contact to FAD.

Belongs to the DadA oxidoreductase family. Requires FAD as cofactor.

It catalyses the reaction a D-alpha-amino acid + A + H2O = a 2-oxocarboxylate + AH2 + NH4(+). It participates in amino-acid degradation; D-alanine degradation; NH(3) and pyruvate from D-alanine: step 1/1. Functionally, oxidative deamination of D-amino acids. The chain is D-amino acid dehydrogenase from Pseudomonas putida (strain GB-1).